Consider the following 278-residue polypeptide: Small ribosomal subunit protein uS2 (278 aa).

Residues 233-258 (IDMEAAGEAPANKGKKKSAKARLDKS) form a disordered region.

This sequence belongs to the universal ribosomal protein uS2 family.

This Bacteroides fragilis (strain ATCC 25285 / DSM 2151 / CCUG 4856 / JCM 11019 / LMG 10263 / NCTC 9343 / Onslow / VPI 2553 / EN-2) protein is Small ribosomal subunit protein uS2.